The primary structure comprises 173 residues: Adenine phosphoribosyltransferase (173 aa).

Belongs to the purine/pyrimidine phosphoribosyltransferase family. Homodimer.

The protein localises to the cytoplasm. The enzyme catalyses AMP + diphosphate = 5-phospho-alpha-D-ribose 1-diphosphate + adenine. It functions in the pathway purine metabolism; AMP biosynthesis via salvage pathway; AMP from adenine: step 1/1. In terms of biological role, catalyzes a salvage reaction resulting in the formation of AMP, that is energically less costly than de novo synthesis. This chain is Adenine phosphoribosyltransferase, found in Desulfitobacterium hafniense (strain Y51).